The chain runs to 103 residues: Large ribosomal subunit protein bL21 (103 aa).

It belongs to the bacterial ribosomal protein bL21 family. In terms of assembly, part of the 50S ribosomal subunit. Contacts protein L20.

Functionally, this protein binds to 23S rRNA in the presence of protein L20. In Vibrio parahaemolyticus serotype O3:K6 (strain RIMD 2210633), this protein is Large ribosomal subunit protein bL21.